We begin with the raw amino-acid sequence, 479 residues long: NADH-quinone oxidoreductase subunit N 2 (479 aa).

14 helical membrane-spanning segments follow: residues 4–24 (FVSF…FVVT), 43–63 (GVLV…SGAY), 67–87 (AFSQ…GILS), 99–119 (PEYF…VSSI), 121–141 (VITL…MVAM), 159–179 (IMFG…LYGL), 201–221 (AVTG…VFPF), 239–259 (LIAS…VSLA), 267–287 (ATLL…IALV), 294–314 (LLGF…VAMD), 318–338 (FASA…CFVV), 364–384 (LAVT…FVGF), 401–421 (ALVV…LQIV), and 444–464 (ALCV…AFTI).

Belongs to the complex I subunit 2 family. In terms of assembly, NDH-1 is composed of 14 different subunits. Subunits NuoA, H, J, K, L, M, N constitute the membrane sector of the complex.

The protein localises to the cell inner membrane. It catalyses the reaction a quinone + NADH + 5 H(+)(in) = a quinol + NAD(+) + 4 H(+)(out). In terms of biological role, NDH-1 shuttles electrons from NADH, via FMN and iron-sulfur (Fe-S) centers, to quinones in the respiratory chain. The immediate electron acceptor for the enzyme in this species is believed to be ubiquinone. Couples the redox reaction to proton translocation (for every two electrons transferred, four hydrogen ions are translocated across the cytoplasmic membrane), and thus conserves the redox energy in a proton gradient. The polypeptide is NADH-quinone oxidoreductase subunit N 2 (Opitutus terrae (strain DSM 11246 / JCM 15787 / PB90-1)).